A 179-amino-acid chain; its full sequence is MENVEDKYNSPLKSQKLFIGAQICLRIVTIGATLAATWIMVTDKQSITFGDFVMVAKYNYSSAFKFFVLANVIACACSVVSLLFLCALGRYSSNPGHVFLLFLHDLLMMSLVLAGCSAATAIGFLGKYGNTKSGWMPICDQFGQFCNRGTISMMLSYLSMVCLLILTVTSANKSRQIHV.

Topologically, residues 1–16 (MENVEDKYNSPLKSQK) are cytoplasmic. Residues 17-37 (LFIGAQICLRIVTIGATLAAT) traverse the membrane as a helical segment. The Extracellular segment spans residues 38 to 65 (WIMVTDKQSITFGDFVMVAKYNYSSAFK). A glycan (N-linked (GlcNAc...) asparagine) is linked at Asn-59. Residues 66-86 (FFVLANVIACACSVVSLLFLC) traverse the membrane as a helical segment. Residues 87-105 (ALGRYSSNPGHVFLLFLHD) are Cytoplasmic-facing. A helical membrane pass occupies residues 106–126 (LLMMSLVLAGCSAATAIGFLG). The Extracellular portion of the chain corresponds to 127–150 (KYGNTKSGWMPICDQFGQFCNRGT). The chain crosses the membrane as a helical span at residues 151–171 (ISMMLSYLSMVCLLILTVTSA). Residues 172 to 179 (NKSRQIHV) are Cytoplasmic-facing.

It belongs to the Casparian strip membrane proteins (CASP) family. As to quaternary structure, homodimer and heterodimers.

It localises to the cell membrane. This is CASP-like protein 1F1 from Ricinus communis (Castor bean).